We begin with the raw amino-acid sequence, 203 residues long: Nascent polypeptide-associated complex subunit alpha-like protein 1 (203 aa).

Over residues 1–23 (MTTEEKEILAAKLEEQKIDLDKP) the composition is skewed to basic and acidic residues. The interval 1 to 71 (MTTEEKEILA…SEKKSRKAML (71 aa)) is disordered. Over residues 24 to 50 (EVEDDDDNEDDDSDDDDKDDDEADGLD) the composition is skewed to acidic residues. Serine 36 is subject to Phosphoserine. The NAC-A/B domain maps to 60 to 125 (SRSEKKSRKA…AKIEDLSSQI (66 aa)). The UBA domain maps to 158–203 (EVDEEGVEPKDIELVMTQAGVSRPNAVKALKAADGDIVSAIMELTT).

This sequence belongs to the NAC-alpha family.

Its function is as follows. May promote appropriate targeting of ribosome-nascent polypeptide complexes. The protein is Nascent polypeptide-associated complex subunit alpha-like protein 1 of Arabidopsis thaliana (Mouse-ear cress).